The primary structure comprises 225 residues: Proteasome activator 28 (225 aa).

It belongs to the PA28 family. As to quaternary structure, homoheptamer. The homoheptamer associates with the 20S proteasome.

Its subcellular location is the nucleus. Functionally, subunit of the 11S REG (also called PA28) proteasome regulator, a doughnut-shaped homoheptamer which associates with the proteasome. 11S REG-gamma activates preferentially the trypsin-like catalytic subunit of the proteasome. May also be involved in cell cycle regulation. The sequence is that of Proteasome activator 28 (psmE3) from Dictyostelium discoideum (Social amoeba).